A 277-amino-acid chain; its full sequence is Pantothenate synthetase (277 aa).

26 to 33 serves as a coordination point for ATP; sequence MGNLHAGH. The Proton donor role is filled by His33. Residue Gln57 participates in (R)-pantoate binding. Gln57 provides a ligand contact to beta-alanine. 143-146 lines the ATP pocket; sequence GEKD. Gln149 contacts (R)-pantoate. ATP-binding positions include Val172 and 180–183; that span reads LSSR.

The protein belongs to the pantothenate synthetase family. Homodimer.

It is found in the cytoplasm. The catalysed reaction is (R)-pantoate + beta-alanine + ATP = (R)-pantothenate + AMP + diphosphate + H(+). Its pathway is cofactor biosynthesis; (R)-pantothenate biosynthesis; (R)-pantothenate from (R)-pantoate and beta-alanine: step 1/1. In terms of biological role, catalyzes the condensation of pantoate with beta-alanine in an ATP-dependent reaction via a pantoyl-adenylate intermediate. This Nitrosomonas europaea (strain ATCC 19718 / CIP 103999 / KCTC 2705 / NBRC 14298) protein is Pantothenate synthetase.